We begin with the raw amino-acid sequence, 494 residues long: Sugar phosphate exchanger 3 (494 aa).

The helical transmembrane segment at 10–30 (GALLTSFSHHHLAVFLLTFFS) threads the bilayer. N-linked (GlcNAc...) asparagine glycosylation occurs at N58. 5 consecutive transmembrane segments (helical) span residues 81 to 101 (TLFL…GLFI), 113 to 133 (WVLS…GTLT), 146 to 166 (GLWI…VAVM), 177 to 197 (VVFG…AFLA), and 209 to 229 (FLVT…GLLV). Residues 240-261 (GAEESSEEDSQRPLIDGAENED) form a disordered region. 6 helical membrane passes run 297 to 317 (LAYA…PFYL), 333 to 353 (IWYD…SDVL), 357 to 377 (APVL…YSRS), 386 to 406 (LLMT…SSAI), 428 to 448 (GIVD…VSLI), and 457 to 477 (VFYF…PLIV).

It belongs to the major facilitator superfamily. Organophosphate:Pi antiporter (OPA) (TC 2.A.1.4) family. As to quaternary structure, interacts with ATRAID; the interaction is direct and both proteins are mutually dependent for their stability. Post-translationally, glycosylated.

The protein resides in the endoplasmic reticulum membrane. Its subcellular location is the lysosome membrane. Its function is as follows. Unlike the other SLC37 members, lacks glucose-6-phosphate antiporter activity. In osteoclasts, forms a transporter complex with ATRAID for nitrogen-containing-bisphophonates (N-BPs) required for releasing N-BP molecules that have trafficked to lysosomes through fluid-phase endocytosis into the cytosol. This Mus musculus (Mouse) protein is Sugar phosphate exchanger 3 (Slc37a3).